Reading from the N-terminus, the 858-residue chain is Ubiquitin carboxyl-terminal hydrolase 13 (858 aa).

S112 bears the Phosphoserine mark. The UBP-type; degenerate zinc-finger motif lies at 185 to 293 (PVSKYANNLV…KHLAHFGIDM (109 aa)). Zn(2+) is bound by residues C209, C212, C229, and H242. K309 is covalently cross-linked (Glycyl lysine isopeptide (Lys-Gly) (interchain with G-Cter in SUMO2)). The region spanning 334–856 (TGLKNLGNSC…LGYMYFYRRI (523 aa)) is the USP domain. The active-site Nucleophile is C343. K403 is covalently cross-linked (Glycyl lysine isopeptide (Lys-Gly) (interchain with G-Cter in SUMO2)). 2 consecutive UBA domains span residues 650 to 691 (DIDE…IIVH) and 722 to 762 (QPPE…IFSH). The active-site Proton acceptor is the H818.

This sequence belongs to the peptidase C19 family. Interacts with UFD1. Interacts (via UBA domains) with SIAH2 (when ubiquitinated). Interacts with BAG6; the interaction is direct and may mediate UBL4A deubiquitination. Interacts (via UBA 2 domain) with AMFR; the interaction is direct. Interacts with UBL4A; may be indirect via BAG6. Interacts with NEDD4.

The protein resides in the cytoplasm. It catalyses the reaction Thiol-dependent hydrolysis of ester, thioester, amide, peptide and isopeptide bonds formed by the C-terminal Gly of ubiquitin (a 76-residue protein attached to proteins as an intracellular targeting signal).. Its activity is regulated as follows. Specifically inhibited by spautin-1 (specific and potent autophagy inhibitor-1), a derivative of MBCQ that binds to USP13 and inhibits deubiquitinase activity. Regulated by PIK3C3/VPS34-containing complexes. The weak deubiquitinase activity in vitro suggests the existence of some mechanism that activates the enzyme. Its function is as follows. Deubiquitinase that mediates deubiquitination of target proteins such as BECN1, MITF, SKP2 and USP10 and is involved in various processes such as autophagy, endoplasmic reticulum-associated degradation (ERAD), cell cycle progression or DNA damage response. Component of a regulatory loop that controls autophagy and p53/TP53 levels: mediates deubiquitination of BECN1, a key regulator of autophagy, leading to stabilize the PIK3C3/VPS34-containing complexes. Alternatively, forms with NEDD4 a deubiquitination complex, which subsequently stabilizes VPS34 to promote autophagy. Also deubiquitinates USP10, an essential regulator of p53/TP53 stability. In turn, PIK3C3/VPS34-containing complexes regulate USP13 stability, suggesting the existence of a regulatory system by which PIK3C3/VPS34-containing complexes regulate p53/TP53 protein levels via USP10 and USP13. Recruited by nuclear UFD1 and mediates deubiquitination of SKP2, thereby regulating endoplasmic reticulum-associated degradation (ERAD). Also regulates ERAD through the deubiquitination of UBL4A a component of the BAG6/BAT3 complex. Mediates stabilization of SIAH2 independently of deubiquitinase activity: binds ubiquitinated SIAH2 and acts by impairing SIAH2 autoubiquitination. Regulates the cell cycle progression by stabilizing cell cycle proteins such as SKP2 and AURKB. In addition, plays an important role in maintaining genomic stability and in DNA replication checkpoint activation via regulation of RAP80 and TOPBP1. Deubiquitinates the multifunctional protein HMGB1 and subsequently drives its nucleocytoplasmic localization and its secretion. Positively regulates type I and type II interferon signalings by deubiquitinating STAT1 but negatively regulates antiviral response by deubiquitinating STING1. In Mus musculus (Mouse), this protein is Ubiquitin carboxyl-terminal hydrolase 13 (Usp13).